A 1470-amino-acid polypeptide reads, in one-letter code: MIVRTVCRAKEKCLEKYKNILKYKEQLAKQDQKENETTSNNKDTSSSVPKPSNFRKTKVQNQYNRVFSIDEKVAEYEKILNDKVNMIDAIFNKAEKIRDLFIGTEPLTKELIKNELQYGAIVLNRASDLILAFADNNEPREPEFVLNTDMIVNDLKPLLHPTRIFDYSSFGFDDVNKLAINPKIRYLPNWSINYIRKCIQSFFTSNSNIEVQNLHNYSNHYDNRIYEHAMPNDVKLQILIGLDKMFNKLSIQHRFGTFETQILSCFFMKQKICEYEAYMHLPDCVNKSKKLKKGTETVCWQYLAEIIKHYEGIPFYHHTHSSKFGALDNTKISITTNKEVSCCLPSVMHGLLNGIIGELLCDLSTETALIYAKHLMNCSATSTYQRQLEFKDSFRMWPKLCYDSIGYALAVLYSKDMKPLEHRVEKIDSEFWFDEEEKDKLSSSLSKIPSYMKPFVNNAIQNCKKRGDYINQMICDINKIKLSREPNKFETHDLYLESGKNTEYLRWLTMTSTIISNFGIYNKTSLLLEYEKSISTKTKVMVQQPEPKVSLITEQGLQTPILHDWTKVPVLNEMSSLFDSEWKSTLVKEFEDINDFEKRFVTFLTNKSGGIKSEEPTLSKELKGISNARIIAFALNRNDYQIESKFLNMLIAHGKCAIRFQIDRRARVIVIVPNAIQSSELFLLLGFNVLKSDKRFNEKIAVGKQIGNLLDAKAQMISSGDVLSVKNSSDMKGMDAHTLPNLTLFLRRKMIEVLYELDPTGKCARYFFAEDKEYCLIQHHEKYHEQFVRRLRGPTIHAAKCLYYMFSMNMYLEDNFFSKGMNVSDQTFQSGFFATSAQHTLFLSLYLLNNERKYFSKLDNRMIRLLHSVMGDDVFEVIVNGVKYPNLVKEWLKLRNQGLSKINYEEDVSLSRLFGVFLQQAAILGVYVPYPARMSLFCDERSDTTKRHTLDMIKIVLEVLSSKSQRSYAIDNNISIGYAIWNCHRTSRYLYTDRDKSLIRRLVDHDANLDKLFVIDLSKFENSVRLVYPFVTIMTSPISWPMLYFAHFKIDDPNCTILTYRAKSPTSLNGDGAFLLINQMFFTSDEEHMFKFVEFVKHQDKVVRLKLSSDFLDWKERHTWGFTLGEHLLRFKRLRHLTESRKSELGLGEIEVMVHNLNKYLDSHRVQMSLDSFDQLRKNKITVPSSLMYVNHNRAKIEQSLTVRTETLDERASLDSTFLRHVFSYSIVPKDIEVLKTHALCAIKVRTYSDLKYALSVDGYLPESDDSSFNVILPFLPGYHQSSSYGRLFRYTTLPTVHDRDISGTMGEIVGGLGASFDIDSAIEFGAYVYNINRNLINAAASAIGIPQKFVSKYEQLVQAFIMNNFNLKYHSIFHNAKYFGLSGSLKKFSEYGGYSNKLIRFDTINKMEKFHNAFTRDLVFAYIDELNGRRVYLDYSIHSLLLIMSRGSIKYFTTHLYKLFNPLLSLELD.

Residues 28 to 55 (AKQDQKENETTSNNKDTSSSVPKPSNFR) are disordered. Over residues 37–50 (TTSNNKDTSSSVPK) the composition is skewed to polar residues.

The enzyme catalyses RNA(n) + a ribonucleoside 5'-triphosphate = RNA(n+1) + diphosphate. Functionally, RNA-directed RNA polymerase that is involved in transcription and genome replication. Following infection, it catalyzes the synthesis of fully conservative plus strands. After core assembly, which consists in recruitment of one capped plus-strand for each genomic segments and polymerase complexes, the polymerase switches mode and catalyzes the synthesis of complementary minus-strands. The chain is RNA-directed RNA polymerase VP1 (S1) from Saccharum officinarum (Sugarcane).